Here is a 135-residue protein sequence, read N- to C-terminus: Small ribosomal subunit protein uS8 (135 aa).

The protein belongs to the universal ribosomal protein uS8 family. In terms of assembly, part of the 30S ribosomal subunit. Contacts proteins S5 and S12.

Functionally, one of the primary rRNA binding proteins, it binds directly to 16S rRNA central domain where it helps coordinate assembly of the platform of the 30S subunit. This chain is Small ribosomal subunit protein uS8, found in Parafrankia sp. (strain EAN1pec).